Here is a 76-residue protein sequence, read N- to C-terminus: uncharacterized protein (76 aa).

This sequence to M.jannaschii MJ0857 N-terminal region.

This is an uncharacterized protein from Methanocaldococcus jannaschii (strain ATCC 43067 / DSM 2661 / JAL-1 / JCM 10045 / NBRC 100440) (Methanococcus jannaschii).